The chain runs to 40 residues: Photosystem II reaction center protein J (40 aa).

Residues 8–28 (IPLWIIGTVTGILVIGLIGIF) form a helical membrane-spanning segment.

The protein belongs to the PsbJ family. PSII is composed of 1 copy each of membrane proteins PsbA, PsbB, PsbC, PsbD, PsbE, PsbF, PsbH, PsbI, PsbJ, PsbK, PsbL, PsbM, PsbT, PsbX, PsbY, PsbZ, Psb30/Ycf12, at least 3 peripheral proteins of the oxygen-evolving complex and a large number of cofactors. It forms dimeric complexes.

Its subcellular location is the plastid. The protein localises to the chloroplast thylakoid membrane. In terms of biological role, one of the components of the core complex of photosystem II (PSII). PSII is a light-driven water:plastoquinone oxidoreductase that uses light energy to abstract electrons from H(2)O, generating O(2) and a proton gradient subsequently used for ATP formation. It consists of a core antenna complex that captures photons, and an electron transfer chain that converts photonic excitation into a charge separation. The chain is Photosystem II reaction center protein J from Eucalyptus globulus subsp. globulus (Tasmanian blue gum).